The following is a 243-amino-acid chain: Ribonuclease 3 (243 aa).

Residues Val-10–Gly-146 form the RNase III domain. Mg(2+) is bound at residue Glu-59. Asp-63 is a catalytic residue. The Mg(2+) site is built by Asp-132 and Glu-135. The active site involves Glu-135. The 70-residue stretch at Asp-172 to Gln-241 folds into the DRBM domain. Over residues Gly-219–Ala-231 the composition is skewed to basic and acidic residues. Residues Gly-219–Lys-243 form a disordered region.

Belongs to the ribonuclease III family. As to quaternary structure, homodimer. It depends on Mg(2+) as a cofactor.

It is found in the cytoplasm. The enzyme catalyses Endonucleolytic cleavage to 5'-phosphomonoester.. Functionally, digests double-stranded RNA. Involved in the processing of primary rRNA transcript to yield the immediate precursors to the large and small rRNAs (23S and 16S). Processes some mRNAs, and tRNAs when they are encoded in the rRNA operon. Processes pre-crRNA and tracrRNA of type II CRISPR loci if present in the organism. The sequence is that of Ribonuclease 3 from Staphylococcus aureus (strain Mu3 / ATCC 700698).